Reading from the N-terminus, the 182-residue chain is Cytidylate kinase (182 aa).

7 to 15 (GLPGSGTTS) serves as a coordination point for ATP.

Belongs to the cytidylate kinase family. Type 2 subfamily.

The protein resides in the cytoplasm. It catalyses the reaction CMP + ATP = CDP + ADP. The enzyme catalyses dCMP + ATP = dCDP + ADP. This Methanoregula boonei (strain DSM 21154 / JCM 14090 / 6A8) protein is Cytidylate kinase.